Consider the following 201-residue polypeptide: Large ribosomal subunit protein uL4 (201 aa).

A disordered region spans residues 44-68 (RAQKSRAEVSGSGRKPWRQKGTGRA).

The protein belongs to the universal ribosomal protein uL4 family. In terms of assembly, part of the 50S ribosomal subunit.

Its function is as follows. One of the primary rRNA binding proteins, this protein initially binds near the 5'-end of the 23S rRNA. It is important during the early stages of 50S assembly. It makes multiple contacts with different domains of the 23S rRNA in the assembled 50S subunit and ribosome. Functionally, forms part of the polypeptide exit tunnel. In Buchnera aphidicola subsp. Acyrthosiphon pisum (strain 5A), this protein is Large ribosomal subunit protein uL4.